The primary structure comprises 1085 residues: Error-prone DNA polymerase (1085 aa).

This sequence belongs to the DNA polymerase type-C family. DnaE2 subfamily.

Its subcellular location is the cytoplasm. It catalyses the reaction DNA(n) + a 2'-deoxyribonucleoside 5'-triphosphate = DNA(n+1) + diphosphate. Its function is as follows. DNA polymerase involved in damage-induced mutagenesis and translesion synthesis (TLS). It is not the major replicative DNA polymerase. The sequence is that of Error-prone DNA polymerase from Symbiobacterium thermophilum (strain DSM 24528 / JCM 14929 / IAM 14863 / T).